The sequence spans 217 residues: Uridine kinase (217 aa).

An ATP-binding site is contributed by 17–24 (GASASGKS).

It belongs to the uridine kinase family.

It localises to the cytoplasm. The enzyme catalyses uridine + ATP = UMP + ADP + H(+). It catalyses the reaction cytidine + ATP = CMP + ADP + H(+). It functions in the pathway pyrimidine metabolism; CTP biosynthesis via salvage pathway; CTP from cytidine: step 1/3. Its pathway is pyrimidine metabolism; UMP biosynthesis via salvage pathway; UMP from uridine: step 1/1. The sequence is that of Uridine kinase from Haemophilus ducreyi (strain 35000HP / ATCC 700724).